The sequence spans 153 residues: Protein-export protein SecB (153 aa).

The protein belongs to the SecB family. Homotetramer, a dimer of dimers. One homotetramer interacts with 1 SecA dimer.

The protein localises to the cytoplasm. Functionally, one of the proteins required for the normal export of preproteins out of the cell cytoplasm. It is a molecular chaperone that binds to a subset of precursor proteins, maintaining them in a translocation-competent state. It also specifically binds to its receptor SecA. This is Protein-export protein SecB from Edwardsiella ictaluri (strain 93-146).